A 1728-amino-acid polypeptide reads, in one-letter code: Lysophospholipase NTE1 (1728 aa).

Residues 1-44 (MDSSSIAHESDIVSTERNILPERFISNKQQGNYLEDGSGDGNGK) are Cytoplasmic-facing. The helical transmembrane segment at 45–65 (AAEHWLLAAIFNFFWVISYFI) threads the bilayer. Over 66-97 (SGSTHIAFRSSWYIVSLLLLKFPKWIIVEANH) the chain is Lumenal. A helical membrane pass occupies residues 98–118 (IHLTIPFSVLVVTLAIIFYVS). The Cytoplasmic segment spans residues 119–1728 (YEFLKGRLLS…GFFLHRRNSI (1610 aa)). Residues 141 to 150 (SLNSKNSKSS) show a composition bias toward low complexity. Disordered stretches follow at residues 141 to 167 (SLNS…RRRR), 285 to 368 (RKKK…DEST), 406 to 436 (NDNV…LSTS), 454 to 488 (TEAS…VTTP), 596 to 660 (NLQK…TGSR), and 687 to 756 (ASPS…FTSF). A compositionally biased stretch (basic and acidic residues) spans 153 to 162 (LHHDSKDSNT). Composition is skewed to polar residues over residues 293–303 (SRHGQYNNNSD) and 326–336 (MRSSSRNQNIP). The span at 345-367 (SSDEESDINDGDSESQSESDDES) shows a compositional bias: acidic residues. Polar residues-rich tracts occupy residues 406 to 424 (NDNV…NYTN), 454 to 479 (TEAS…SKSI), and 599 to 609 (KGFQSPTSSRL). Over residues 610 to 628 (TSNFNGNSNNQRTNSRNSQ) the composition is skewed to low complexity. Polar residues-rich tracts occupy residues 642-657 (ELSQ…TPIT) and 729-756 (IYNN…FTSF). A nucleoside 3',5'-cyclic phosphate contacts are provided by residues 854–987 (SPTL…LTSL) and 983–1121 (SLTS…VAKK). Residues 1034–1055 (PELEENSTDYPNDGEEKDSSRD) are disordered. Acidic residues predominate over residues 1036-1049 (LEENSTDYPNDGEE). Residues 1422 to 1586 (LVLGGGGARG…VDNLPVLEMK (165 aa)) enclose the PNPLA domain. The GXGXXG motif lies at 1426–1431 (GGGARG). Positions 1453 to 1457 (GTSIG) match the GXSXG motif. The active-site Nucleophile is the Ser-1455. Catalysis depends on Asp-1573, which acts as the Proton acceptor. A DGA/G motif is present at residues 1573-1575 (DGG).

Belongs to the NTE family.

The protein resides in the endoplasmic reticulum membrane. It carries out the reaction a 1-acyl-sn-glycero-3-phosphocholine + H2O = sn-glycerol 3-phosphocholine + a fatty acid + H(+). Its activity is regulated as follows. Inhibited by organophosphorus esters. Its function is as follows. Intracellular phospholipase B that catalyzes the double deacylation of phosphatidylcholine (PC) to glycerophosphocholine (GroPCho). Plays an important role in membrane lipid homeostasis. Responsible for the rapid PC turnover in response to inositol, elevated temperatures, or when choline is present in the growth medium. In Candida glabrata (strain ATCC 2001 / BCRC 20586 / JCM 3761 / NBRC 0622 / NRRL Y-65 / CBS 138) (Yeast), this protein is Lysophospholipase NTE1 (NTE1).